A 481-amino-acid chain; its full sequence is UDP-N-acetylmuramoyl-L-alanyl-D-glutamate--L-lysine ligase (481 aa).

Residue Ser-42 participates in UDP-N-acetyl-alpha-D-muramoyl-L-alanyl-D-glutamate binding. 118 to 124 is a binding site for ATP; it reads GTKGKTT. UDP-N-acetyl-alpha-D-muramoyl-L-alanyl-D-glutamate contacts are provided by residues 160-161, Ser-187, and Arg-195; that span reads TT. At Lys-229 the chain carries N6-carboxylysine. The L-lysine recognition motif signature appears at 404–407; it reads DDPN.

This sequence belongs to the MurCDEF family. MurE subfamily. Carboxylation is probably crucial for Mg(2+) binding and, consequently, for the gamma-phosphate positioning of ATP.

The protein localises to the cytoplasm. It catalyses the reaction UDP-N-acetyl-alpha-D-muramoyl-L-alanyl-D-glutamate + L-lysine + ATP = UDP-N-acetyl-alpha-D-muramoyl-L-alanyl-gamma-D-glutamyl-L-lysine + ADP + phosphate + H(+). It functions in the pathway cell wall biogenesis; peptidoglycan biosynthesis. Functionally, catalyzes the addition of L-lysine to the nucleotide precursor UDP-N-acetylmuramoyl-L-alanyl-D-glutamate (UMAG) in the biosynthesis of bacterial cell-wall peptidoglycan. This is UDP-N-acetylmuramoyl-L-alanyl-D-glutamate--L-lysine ligase from Streptococcus sanguinis (strain SK36).